The chain runs to 348 residues: Dihydroorotase (348 aa).

The Zn(2+) site is built by His-17 and His-19. Residues 19–21 and Asn-45 contribute to the substrate site; that span reads HLR. Positions 103, 140, and 178 each coordinate Zn(2+). Lys-103 is modified (N6-carboxylysine). Residue His-140 coordinates substrate. Residue Leu-223 participates in substrate binding. Residue Asp-251 participates in Zn(2+) binding. Asp-251 is a catalytic residue. Positions 255 and 267 each coordinate substrate.

It belongs to the metallo-dependent hydrolases superfamily. DHOase family. Class II DHOase subfamily. As to quaternary structure, homodimer. Zn(2+) is required as a cofactor.

The catalysed reaction is (S)-dihydroorotate + H2O = N-carbamoyl-L-aspartate + H(+). It functions in the pathway pyrimidine metabolism; UMP biosynthesis via de novo pathway; (S)-dihydroorotate from bicarbonate: step 3/3. Its function is as follows. Catalyzes the reversible cyclization of carbamoyl aspartate to dihydroorotate. The sequence is that of Dihydroorotase from Enterobacter sp. (strain 638).